The chain runs to 169 residues: Ribosomal RNA large subunit methyltransferase H (169 aa).

Residues Leu85, Gly117, and 136–141 (LGELTW) each bind S-adenosyl-L-methionine.

The protein belongs to the RNA methyltransferase RlmH family. As to quaternary structure, homodimer.

It localises to the cytoplasm. It carries out the reaction pseudouridine(1915) in 23S rRNA + S-adenosyl-L-methionine = N(3)-methylpseudouridine(1915) in 23S rRNA + S-adenosyl-L-homocysteine + H(+). In terms of biological role, specifically methylates the pseudouridine at position 1915 (m3Psi1915) in 23S rRNA. This is Ribosomal RNA large subunit methyltransferase H from Brucella abortus biovar 1 (strain 9-941).